Consider the following 425-residue polypeptide: UPF0597 protein VIBHAR_03081 (425 aa).

This sequence belongs to the UPF0597 family.

The sequence is that of UPF0597 protein VIBHAR_03081 from Vibrio campbellii (strain ATCC BAA-1116).